The following is a 176-amino-acid chain: MKSDFVEVCILGKTVGLKGALKLHDRSDFPNQFKNGAKFYDINSKEFVIKSYDRNNNLVIFENYDSIDLAKTLVNYILYRSINDTIRDCKLAKDEFFYFDIIGCNVFEDKILLGEVIDILEVGAGFLFSIKTEGDLVKAGLNSNFYIPYNDNFTQNIDIKSKKIQVKNSLDILKNS.

The region spanning 93-172 (KDEFFYFDII…KIQVKNSLDI (80 aa)) is the PRC barrel domain.

It belongs to the RimM family. In terms of assembly, binds ribosomal protein uS19.

The protein resides in the cytoplasm. In terms of biological role, an accessory protein needed during the final step in the assembly of 30S ribosomal subunit, possibly for assembly of the head region. Essential for efficient processing of 16S rRNA. May be needed both before and after RbfA during the maturation of 16S rRNA. It has affinity for free ribosomal 30S subunits but not for 70S ribosomes. The chain is Ribosome maturation factor RimM from Campylobacter fetus subsp. fetus (strain 82-40).